A 265-amino-acid polypeptide reads, in one-letter code: Mlc titration factor A (265 aa).

Zn(2+)-binding residues include H111, H148, H152, and E211.

It belongs to the MtfA family. In terms of assembly, interacts with Mlc. Zn(2+) is required as a cofactor.

The protein resides in the cytoplasm. Functionally, involved in the modulation of the activity of the glucose-phosphotransferase system (glucose-PTS). Interacts with the transcriptional repressor Mlc, preventing its interaction with DNA and leading to the modulation of expression of genes regulated by Mlc, including ptsG, which encodes the PTS system glucose-specific EIICB component. Shows zinc-dependent metallopeptidase activity. The sequence is that of Mlc titration factor A from Salmonella choleraesuis (strain SC-B67).